Here is a 336-residue protein sequence, read N- to C-terminus: Carbamoyl dehydratase HypE (336 aa).

Cys-336 bears the S-carbamoylcysteine; by HypF; alternate mark. An S-cyanocysteine; by autocatalysis; alternate modification is found at Cys-336.

The protein belongs to the HypE family. In terms of assembly, homodimer. Forms a complex with HypF. Also forms a complex with HypC, or HybG, and HypD. In terms of processing, modified by HypF, which adds a carboxamido group to the thiolate of the C-terminal cysteine, yielding a protein-S-carboxamide. The carboxamido group is then dehydrated by HypE itself to yield a protein-thiocyanate.

It carries out the reaction C-terminal S-carboxamide-L-cysteinyl-[HypE protein] + ATP = C-terminal S-cyanate-L-cysteinyl-[HypE protein] + ADP + phosphate + H(+). The protein operates within protein modification; [NiFe] hydrogenase maturation. Its function is as follows. Involved in the maturation of [NiFe] hydrogenases. Along with HypF, it catalyzes the synthesis of the CN ligands of the active site iron of [NiFe]-hydrogenases. HypE catalyzes the ATP-dependent dehydration of the carboxamido group attached to its C-terminal cysteine to a cyano group. The cyano group is then transferred from HypE to the HypC-HypD complex or the HybG-HypD complex. The polypeptide is Carbamoyl dehydratase HypE (Escherichia coli (strain K12)).